Consider the following 474-residue polypeptide: NAD(P) transhydrogenase subunit beta (474 aa).

Helical transmembrane passes span 4 to 24 (GLVQ…LAGL), 46 to 66 (IATI…AMII), 83 to 103 (MPEL…LVGF), 132 to 152 (VLTN…AVTF), 181 to 200 (LAAL…NPES), 202 to 222 (FPVL…VASI), 229 to 249 (VVVS…GFIL), 253 to 273 (LLIV…YIMC), and 321 to 341 (VIIT…VADI).

It belongs to the PNT beta subunit family. As to quaternary structure, heterodimer of an alpha and a beta chain.

The protein resides in the cell inner membrane. The catalysed reaction is NAD(+) + NADPH + H(+)(in) = NADH + NADP(+) + H(+)(out). In terms of biological role, the transhydrogenation between NADH and NADP is coupled to respiration and ATP hydrolysis and functions as a proton pump across the membrane. This chain is NAD(P) transhydrogenase subunit beta (pntB), found in Haemophilus influenzae (strain ATCC 51907 / DSM 11121 / KW20 / Rd).